Here is a 403-residue protein sequence, read N- to C-terminus: Phosphoglycerate kinase (403 aa).

Residues 21-23 (DFN), Arg-36, 59-62 (HLGR), Arg-119, and Arg-159 each bind substrate. ATP-binding positions include Lys-214, Gly-301, Glu-332, and 359 to 362 (GGDS).

Belongs to the phosphoglycerate kinase family. Monomer.

It localises to the cytoplasm. The catalysed reaction is (2R)-3-phosphoglycerate + ATP = (2R)-3-phospho-glyceroyl phosphate + ADP. Its pathway is carbohydrate degradation; glycolysis; pyruvate from D-glyceraldehyde 3-phosphate: step 2/5. This is Phosphoglycerate kinase from Lactobacillus helveticus (strain DPC 4571).